The chain runs to 81 residues: Styelin-D (81 aa).

Residues 1–22 form the signal peptide; sequence MQMKATILIVLVALFMIQQSEA. Trp-24 carries the 6'-bromotryptophan modification. At Arg-26 the chain carries 3,4-dihydroxyarginine. 4,5-dihydroxylysine is present on residues Lys-27, Lys-30, and Lys-34. 3',4'-dihydroxyphenylalanine is present on residues Tyr-36 and Tyr-37. Lys-38 is subject to 4,5-dihydroxylysine. A 5-hydroxylysine modification is found at Lys-40. Residues Tyr-41 and Tyr-42 each carry the 3',4'-dihydroxyphenylalanine modification. A 5-hydroxylysine modification is found at Lys-44. The residue at position 54 (Leu-54) is a Leucine amide. The propeptide at 56–81 is removed in mature form; that stretch reads DMTDEEFQDFMKEVEQAREEELQSRQ.

In terms of processing, contains L-DOPA (3',4'-dihydroxyphenylalanine). In terms of tissue distribution, hemocytes and pharyngeal tissues.

The protein resides in the secreted. In terms of biological role, bactericidal against several Gram-positive and Gram-negative bacteria. Plays a significant role in the innate immune mechanisms of S.clava. In Styela clava (Sea squirt), this protein is Styelin-D.